The chain runs to 412 residues: MTPSISWGLLLLAGLCCLVPSFLAEDVQETDTSQKDQSPASHEIATNLGDFAISLYRELVHQSNTSNIFFSPVSIATAFAMLSLGSKGDTHTQILEGLQFNLTQTSEADIHKSFQHLLQTLNRPDSELQLSTGNGLFVNNDLKLVEKFLEEAKNHYQAEVFSVNFAESEEAKKVINDFVEKGTQGKIVEAVKKLDQDTVFALANYILFKGKWKKPFDPENTEEAEFHVDESTTVKVPMMTLSGMLDVHHCSTLSSWVLLMDYAGNATAVFLLPDDGKMQHLEQTLSKELISKFLLNRRRRLAQIHFPRLSISGEYNLKTLMSPLGITRIFNNGADLSGITEENAPLKLSQAVHKAVLTIDETGTEAAAVTVLLAVPYSMPPILRFDHPFLFIIFEEHTQSPLFVGKVVDPTH.

Positions 1 to 24 are cleaved as a signal peptide; the sequence is MTPSISWGLLLLAGLCCLVPSFLA. Residues N64, N101, and N265 are each glycosylated (N-linked (GlcNAc...) asparagine). The interval 368-387 is RCL; the sequence is AVTVLLAVPYSMPPILRFDH.

It belongs to the serpin family.

It localises to the secreted. Functionally, inhibitor of serine proteases. Can inhibit trypsin and chymotrypsin; relatively ineffective against elastase. The polypeptide is Alpha-1-antitrypsin 1-3 (Serpina1c) (Mus musculus (Mouse)).